The sequence spans 530 residues: UDP-N-acetylmuramoyl-L-alanyl-D-glutamate--2,6-diaminopimelate ligase (530 aa).

Leu-52 contributes to the UDP-N-acetyl-alpha-D-muramoyl-L-alanyl-D-glutamate binding site. Position 139 to 145 (139 to 145) interacts with ATP; sequence GTSGKTT. Residues 181–182, Ser-208, and Arg-216 contribute to the UDP-N-acetyl-alpha-D-muramoyl-L-alanyl-D-glutamate site; that span reads TT. Position 248 is an N6-carboxylysine (Lys-248). Meso-2,6-diaminopimelate is bound by residues Arg-410, 434 to 437, Gly-488, and Glu-492; that span reads DNPR. Residues 434–437 carry the Meso-diaminopimelate recognition motif motif; that stretch reads DNPR.

Belongs to the MurCDEF family. MurE subfamily. The cofactor is Mg(2+). In terms of processing, carboxylation is probably crucial for Mg(2+) binding and, consequently, for the gamma-phosphate positioning of ATP.

The protein localises to the cytoplasm. It catalyses the reaction UDP-N-acetyl-alpha-D-muramoyl-L-alanyl-D-glutamate + meso-2,6-diaminopimelate + ATP = UDP-N-acetyl-alpha-D-muramoyl-L-alanyl-gamma-D-glutamyl-meso-2,6-diaminopimelate + ADP + phosphate + H(+). Its pathway is cell wall biogenesis; peptidoglycan biosynthesis. Its function is as follows. Catalyzes the addition of meso-diaminopimelic acid to the nucleotide precursor UDP-N-acetylmuramoyl-L-alanyl-D-glutamate (UMAG) in the biosynthesis of bacterial cell-wall peptidoglycan. This Mycobacterium leprae (strain TN) protein is UDP-N-acetylmuramoyl-L-alanyl-D-glutamate--2,6-diaminopimelate ligase.